Consider the following 99-residue polypeptide: MEPEQMLEGQTQVAENPHSEYGLTDNVERIVENEKINAEKSSKQKVDLQSLPTRAYLDQTVVPILLQGLAVLAKERPPNPIEFLASYLLKNKAQFEDRN.

Met1 is subject to N-acetylmethionine. Positions 1 to 26 (MEPEQMLEGQTQVAENPHSEYGLTDN) are disordered. Phosphoserine is present on Ser19. The residue at position 35 (Lys35) is an N6-acetyllysine; alternate. Lys35 is covalently cross-linked (Glycyl lysine isopeptide (Lys-Gly) (interchain with G-Cter in SUMO2); alternate).

The protein belongs to the dpy-30 family. As to quaternary structure, homodimer. Core component of several methyltransferase-containing complexes including MLL1/MLL, MLL2/3 (also named ASCOM complex) and MLL4/WBP7. Each complex is at least composed of ASH2L, RBBP5, WDR5, DPY30, one or more specific histone methyltransferases (KMT2A/MLL1, KMT2D/MLL2, KMT2C/MLL3 and KMT2B/MLL4), and the facultative components MEN1, HCFC1, HCFC2, NCOA6, KDM6A, PAXIP1/PTIP, PAGR1 and alpha- and beta-tubulin. Interacts with ASH2L; the interaction is direct. Interacts with ARFGEF1. Component of the SET1 complex, at least composed of the catalytic subunit (SETD1A or SETD1B), WDR5, WDR82, RBBP5, ASH2L/ASH2, CXXC1/CFP1, HCFC1 and DPY30.

It localises to the nucleus. The protein localises to the golgi apparatus. Its subcellular location is the trans-Golgi network. Functionally, as part of the MLL1/MLL complex, involved in the methylation of histone H3 at 'Lys-4', particularly trimethylation. Histone H3 'Lys-4' methylation represents a specific tag for epigenetic transcriptional activation. May play some role in histone H3 acetylation. In embryonic stem cells, may play a crucial role in retinoic acid-induced differentiation along the neural lineage, regulating gene induction and H3 'Lys-4' methylation at key developmental loci. May also play an indirect or direct role in endosomal transport. The sequence is that of Protein dpy-30 homolog (DPY30) from Bos taurus (Bovine).